We begin with the raw amino-acid sequence, 670 residues long: Probable plastid-lipid-associated protein 14, chloroplastic (670 aa).

A chloroplast-targeting transit peptide spans 1–52; that stretch reads MALCGVCSTPNLPNLQVFRSVRNSSIGYKRNHSLWQLRSSSFRAKSVIFHCS. In terms of domain architecture, Protein kinase spans 88-399; that stretch reads FRILDRVSIG…CLDALKHPFL (312 aa).

The protein belongs to the PAP/fibrillin family. Post-translationally, not autophosphorylated. Expressed in roots.

The protein localises to the plastid. It is found in the chloroplast. Its function is as follows. Directly regulated by DOF3.6/OBP3; unknown function. This chain is Probable plastid-lipid-associated protein 14, chloroplastic (PAP14), found in Arabidopsis thaliana (Mouse-ear cress).